An 80-amino-acid chain; its full sequence is Bowman-Birk type proteinase inhibitor (80 aa).

7 disulfides stabilise this stretch: C19–C70, C20–C35, C23–C66, C25–C33, C41–C47, C44–C59, and C49–C57.

As to quaternary structure, occurs as a monomer, dimer or trimer. The dimer may be the active form. In terms of processing, binds calcium, probably through His-3 to His-6.

Protease inhibitor with activity against cysteine, aspartic and serine proteases. Highest activity against serine proteases, in particular trypsin and trypsin-like proteases. The protein is Bowman-Birk type proteinase inhibitor of Phaseolus acutifolius (Tepary bean).